We begin with the raw amino-acid sequence, 203 residues long: ATP-dependent Clp protease proteolytic subunit 2 (203 aa).

Ser100 functions as the Nucleophile in the catalytic mechanism. Residue His125 is part of the active site.

The protein belongs to the peptidase S14 family. As to quaternary structure, fourteen ClpP subunits assemble into 2 heptameric rings which stack back to back to give a disk-like structure with a central cavity, resembling the structure of eukaryotic proteasomes.

The protein localises to the cytoplasm. It carries out the reaction Hydrolysis of proteins to small peptides in the presence of ATP and magnesium. alpha-casein is the usual test substrate. In the absence of ATP, only oligopeptides shorter than five residues are hydrolyzed (such as succinyl-Leu-Tyr-|-NHMec, and Leu-Tyr-Leu-|-Tyr-Trp, in which cleavage of the -Tyr-|-Leu- and -Tyr-|-Trp bonds also occurs).. Functionally, cleaves peptides in various proteins in a process that requires ATP hydrolysis. Has a chymotrypsin-like activity. Plays a major role in the degradation of misfolded proteins. This Thermobifida fusca (strain YX) protein is ATP-dependent Clp protease proteolytic subunit 2.